We begin with the raw amino-acid sequence, 899 residues long: 1,4-alpha-glucan-branching enzyme 3, chloroplastic/amyloplastic (899 aa).

The N-terminal 49 residues, 1-49, are a transit peptide targeting the chloroplast; it reads MVSLSNQTRFSFHPNNLVVSEKRRLGISGVNFPRKIKLKITCFAAERPR. The tract at residues 47–67 is disordered; it reads RPRQEKQKKKSQSQSTSDAEA. The active-site Proton donor is glutamate 612.

The protein belongs to the glycosyl hydrolase 13 family. GlgB subfamily. As to quaternary structure, monomer. In terms of tissue distribution, mostly expressed in flowers and inflorescence, and, to a lower extent, in seedlings, roots, stems, leaves, siliques and seeds.

The protein localises to the plastid. The protein resides in the chloroplast stroma. It localises to the amyloplast. It catalyses the reaction Transfers a segment of a (1-&gt;4)-alpha-D-glucan chain to a primary hydroxy group in a similar glucan chain.. Its pathway is glycan biosynthesis; starch biosynthesis. Functionally, catalyzes the formation of the alpha-1,6-glucosidic linkages in starch by scission of a 1,4-alpha-linked oligosaccharide from growing alpha-1,4-glucan chains and the subsequent attachment of the oligosaccharide to the alpha-1,6 position. Essential during embryogenesis. This Arabidopsis thaliana (Mouse-ear cress) protein is 1,4-alpha-glucan-branching enzyme 3, chloroplastic/amyloplastic (SBE3).